The following is a 141-amino-acid chain: Protein stum homolog (141 aa).

S26 carries the post-translational modification Phosphoserine. 2 consecutive transmembrane segments (helical) span residues 51–71 and 87–107; these read FPVA…GTFV and RHVC…ILTA.

Belongs to the SPEC3 family. Stum subfamily.

It is found in the membrane. The chain is Protein stum homolog from Homo sapiens (Human).